Reading from the N-terminus, the 431-residue chain is Tyrosine--tRNA ligase (431 aa).

Tyr34 provides a ligand contact to L-tyrosine. Positions 39 to 48 (PTADSLHIGH) match the 'HIGH' region motif. Residues Tyr171 and Gln175 each coordinate L-tyrosine. The 'KMSKS' region motif lies at 231-235 (KFGKT). Residue Lys234 participates in ATP binding. Residues 353–422 (INAVEALVKT…GKYTILRRGK (70 aa)) form the S4 RNA-binding domain.

Belongs to the class-I aminoacyl-tRNA synthetase family. TyrS type 1 subfamily. In terms of assembly, homodimer.

Its subcellular location is the cytoplasm. It carries out the reaction tRNA(Tyr) + L-tyrosine + ATP = L-tyrosyl-tRNA(Tyr) + AMP + diphosphate + H(+). Catalyzes the attachment of tyrosine to tRNA(Tyr) in a two-step reaction: tyrosine is first activated by ATP to form Tyr-AMP and then transferred to the acceptor end of tRNA(Tyr). The sequence is that of Tyrosine--tRNA ligase from Neisseria gonorrhoeae (strain ATCC 700825 / FA 1090).